Reading from the N-terminus, the 118-residue chain is UPF0058 protein MJ1132 (118 aa).

This sequence belongs to the UPF0058 family.

The polypeptide is UPF0058 protein MJ1132 (Methanocaldococcus jannaschii (strain ATCC 43067 / DSM 2661 / JAL-1 / JCM 10045 / NBRC 100440) (Methanococcus jannaschii)).